Reading from the N-terminus, the 412-residue chain is Phosphoglycerate kinase 1 (412 aa).

Substrate is bound by residues 28–30 (DFN), 65–68 (HQGR), R122, and R162. Residues E336 and 361–364 (GGHT) contribute to the ATP site.

It belongs to the phosphoglycerate kinase family. In terms of assembly, monomer.

The protein resides in the cytoplasm. It catalyses the reaction (2R)-3-phosphoglycerate + ATP = (2R)-3-phospho-glyceroyl phosphate + ADP. The protein operates within carbohydrate degradation; glycolysis; pyruvate from D-glyceraldehyde 3-phosphate: step 2/5. The sequence is that of Phosphoglycerate kinase 1 from Methanosarcina acetivorans (strain ATCC 35395 / DSM 2834 / JCM 12185 / C2A).